The following is a 1881-amino-acid chain: MAGLQLMTPASSPMGPFFGLPWQQEAIHDNIYTPRKYQVELLEAALDHNIIVCLNSGSGKTFIAVLLSKELSYQIRGDFSKNAKRTVFLVNSEKQVSQQVSAVRTHTDLKVGEYSDLQKTQCWAKEKWYQEFQTHQVLVMTCHIFLNVLKTGNVSLSNINLLVFDECHLAIQDHPYRDIMKICESCQTCPRILGLTASILNGKCDPHDLEEKIQNLEEILRSNAETATDLVVLDRYASQPCEIVLDCGPYVDRSGLYQRLLNELDEALNFLTDCNISTHSKERDSTIISKQILSDCWAVLLVLGPWCADKVAGMMVRELQKYIKHEQEELHRKFLLFTDTILRKIHALCEEHFSPASLDMKFVTPKVIKLLEILRKYKPYERQQFESVEWYNNRNQDNYVSWSDSEDDDDDEDEEIEEKEKTETSFPSPFTNILCGIIFVERRYTAVVLNRLIKEAGKQDPELAYISSNFITGHGIGKNQPRNKQMEVEFRKQEEVLRKFRAHETNLLIATSIVEEGVDIPKCNLVVRFDLPSEYRSYVQSKGRARAPISNYIMLADSDKIKAFEEDLKTYKAIEKILRNKCSKSMDCGNTESEPIVDDDEIFPPYVLRQDDGSPRVTINTAIGHINRYCARLPSDPFTHLAPKCRTRELPDGPYRSTLYLPINSPLRAPIVGPPMNCARLAERAVALICCKKLHEIGELDDHLMPVGKETVKYEEELDLHDEEETSVPGRPGSTKRRQCYPKAIPECLRNSYPKPGQPCYLYVIGMVLTTPLPDELNFRRRKLYPPEDTTRCFGILTAKPIPQIPHFPVYTRSGEVTISIELKKSGFSLNLEQLELITRLHRYIFSHILRLEKPALEFKPTVADCAYCVLPLNVVNDSGTLDIDFKFVEDIEKSEARTGIPNTQYSAEGPFIFKLEDYQDAVIIPRYRNFDQPHRFYVADVYTDLTPLSKFPSPEYETFAEYYKTKYNLDLTNLNQPLLDVDHTSSRLNLLTPRHLNQKGKALPLSSAEKRKAKWESLQNKQILVPELCAIHPVPASLWRKAVCLPSILYRLHCLLTAEELRAQTAIDAGVGVKSLPEDFRYPNLDFGWKRSIDGKTFISNQSFSAMERESDCRLDITTVPDSATSSAAHHVMYTQMNDQMSVNCTPPCPKSLSDLQGVCFSDDCKAINGITCNGLTNGNWEAESGVCFQKDELIACKQEIPEKSTSFHVQNLPNDNQPILNECTLSKKFLDGNVGKPISDECPSTCTSDINYESGLSSGYSSKTLGPNPGLILQALTLSNASDGFNLERLEMLGDSFLKHAITTYLFCTYPDSHEGRLSYMRSKKVSNCNLYRLGKKKGSPSRMVVSIFDPPVNWLPPGYIVNQDKNCDKWESNETSGESVMANGKIDEDFEDEEDEDLMWRNPKEETDFDDDFLEYDQEHIKFIDNMLMGSGAFVKKIQLSAFAPPDQNYEWRPPKKPPLESAPFRSEFDDFDYSSWDAMCYLDPSKAVEEDDFVVGFWNPSEENGGADAGKQSISYDLHTEQCIADKSIADCVEALLGCYLTSCGERAAQLFLCSLGLKVLPEVRKPVTNTSTRGNYSLDGRTNSELSCKGIEYGYLKIPPRCMFEHPEAEKTLDHLISGFENFEKKINYQFKNKAYLLQAFTHASYHYNTITDCYQRLEFLGDAILDYLITKHLYEDPRQHSPGVLTDLRSALVNNTIFASLAVKYDYHKYFKAISPELFHVIDDFVQFQLEKNEMQGMDSELRRSEEDEEKEEDIEVPKAMGDIFESLAGAIYMDSGMSLETVWRVYYPMMQPLIEKFSANVPRSPVRELLEMEPETAKFSPAERTYDGKVRVMVEVVGKGKFKGVGRSYRIAKSAAARRALRSLKANQSQVPNS.

The 177-residue stretch at 41–217 (LLEAALDHNI…DLEEKIQNLE (177 aa)) folds into the Helicase ATP-binding domain. 54-61 (LNSGSGKT) contributes to the ATP binding site. A DECH box motif is present at residues 165–168 (DECH). Residues 425–594 (SFPSPFTNIL…SMDCGNTESE (170 aa)) form the Helicase C-terminal domain. The Dicer dsRNA-binding fold domain occupies 622-714 (AIGHINRYCA…MPVGKETVKY (93 aa)). Residues 887–1034 (KFVEDIEKSE…LVPELCAIHP (148 aa)) enclose the PAZ domain. 2 RNase III domains span residues 1249-1380 (TSDI…ETSG) and 1625-1783 (FENF…MDSG). Positions 1293, 1371, 1374, 1664, 1769, and 1772 each coordinate Mg(2+). One can recognise a DRBM domain in the interval 1808-1873 (VPRSPVRELL…ARRALRSLKA (66 aa)).

Belongs to the helicase family. Dicer subfamily. As to quaternary structure, component of the RISC loading complex (RLC), or micro-RNA (miRNA) loading complex (miRLC), which is composed of dicer1, ago2 and tarbp2; dicer1 and tarbp2 are required to process precursor miRNAs (pre-miRNAs) to mature miRNAs and then load them onto ago2. Note that the trimeric RLC/miRLC is also referred to as RISC. It depends on Mg(2+) as a cofactor. Requires Mn(2+) as cofactor.

The protein resides in the cytoplasm. The catalysed reaction is Endonucleolytic cleavage to 5'-phosphomonoester.. Functionally, double-stranded RNA (dsRNA) endoribonuclease playing a central role in short dsRNA-mediated post-transcriptional gene silencing. Cleaves naturally occurring long dsRNAs and short hairpin pre-microRNAs (miRNA) into fragments of twenty-one to twenty-three nucleotides with 3' overhang of two nucleotides, producing respectively short interfering RNAs (siRNA) and mature microRNAs. SiRNAs and miRNAs serve as guide to direct the RNA-induced silencing complex (RISC) to complementary RNAs to degrade them or prevent their translation. Gene silencing mediated by siRNAs, also called RNA interference, controls the elimination of transcripts from mobile and repetitive DNA elements of the genome but also the degradation of exogenous RNA of viral origin for instance. The miRNA pathway on the other side is a mean to specifically regulate the expression of target genes. During embryonic development, at the left-right organizer, post-transcriptionally regulates the expression of dand5 in flow sensor cells. In post-flow stages, acts along with Bicc1 to repress dand5 mRNA translation and decay. Decreased Dand5 expression lifts repression of Nodal and defines leftness by induction of the lateral plate mesoderm Nodal signaling cascade. The chain is Endoribonuclease Dicer-S (dicer1.S) from Xenopus laevis (African clawed frog).